The following is a 198-amino-acid chain: Recombination protein RecR (198 aa).

The C4-type zinc finger occupies 56 to 71 (CKICHSLTENEICDIC). Residues 79–174 (HLLCVVESPA…HMTRIAQGVP (96 aa)) enclose the Toprim domain.

This sequence belongs to the RecR family.

Its function is as follows. May play a role in DNA repair. It seems to be involved in an RecBC-independent recombinational process of DNA repair. It may act with RecF and RecO. This Acinetobacter baylyi (strain ATCC 33305 / BD413 / ADP1) protein is Recombination protein RecR.